A 425-amino-acid chain; its full sequence is Glycosyl hydrolase family 109 protein 2 (425 aa).

Residues 29 to 30 (NR), Glu-51, 99 to 102 (WLTH), 119 to 120 (EV), and Asn-148 each bind NAD(+). Position 177 (Tyr-177) interacts with substrate. NAD(+) contacts are provided by residues 194–198 (FHNHW) and Tyr-211. Residues 211 to 214 (YPTH) and Tyr-293 contribute to the substrate site.

It belongs to the Gfo/Idh/MocA family. Glycosyl hydrolase 109 subfamily. NAD(+) serves as cofactor.

In terms of biological role, glycosidase. In Bacteroides fragilis (strain YCH46), this protein is Glycosyl hydrolase family 109 protein 2.